A 189-amino-acid polypeptide reads, in one-letter code: Elongation factor P (189 aa).

Residue lysine 34 is modified to N6-(3,6-diaminohexanoyl)-5-hydroxylysine.

It belongs to the elongation factor P family. May be beta-lysylated on the epsilon-amino group of Lys-34 by the combined action of EpmA and EpmB, and then hydroxylated on the C5 position of the same residue by EpmC (if this protein is present). Lysylation is critical for the stimulatory effect of EF-P on peptide-bond formation. The lysylation moiety may extend toward the peptidyltransferase center and stabilize the terminal 3-CCA end of the tRNA. Hydroxylation of the C5 position on Lys-34 may allow additional potential stabilizing hydrogen-bond interactions with the P-tRNA.

It localises to the cytoplasm. It participates in protein biosynthesis; polypeptide chain elongation. Functionally, involved in peptide bond synthesis. Alleviates ribosome stalling that occurs when 3 or more consecutive Pro residues or the sequence PPG is present in a protein, possibly by augmenting the peptidyl transferase activity of the ribosome. Modification of Lys-34 is required for alleviation. This chain is Elongation factor P, found in Legionella pneumophila (strain Lens).